The sequence spans 436 residues: Trigger factor (436 aa).

The PPIase FKBP-type domain occupies 161–246 (GMRVTMDFVG…LNKVEEQILP (86 aa)).

It belongs to the FKBP-type PPIase family. Tig subfamily.

The protein localises to the cytoplasm. The enzyme catalyses [protein]-peptidylproline (omega=180) = [protein]-peptidylproline (omega=0). Involved in protein export. Acts as a chaperone by maintaining the newly synthesized protein in an open conformation. Functions as a peptidyl-prolyl cis-trans isomerase. The sequence is that of Trigger factor from Aeromonas hydrophila subsp. hydrophila (strain ATCC 7966 / DSM 30187 / BCRC 13018 / CCUG 14551 / JCM 1027 / KCTC 2358 / NCIMB 9240 / NCTC 8049).